The sequence spans 246 residues: 14-3-3 protein beta/alpha (246 aa).

M1 carries the post-translational modification N-acetylmethionine. T2 is modified (N-acetylthreonine; in 14-3-3 protein beta/alpha, N-terminally processed). Phosphothreonine is present on T2. K5 bears the N6-acetyllysine mark. N6-acetyllysine; alternate is present on K51. Residue K51 forms a Glycyl lysine isopeptide (Lys-Gly) (interchain with G-Cter in SUMO2); alternate linkage. S60 is modified (phosphoserine). K70 bears the N6-acetyllysine mark. Y84 and Y106 each carry 3'-nitrotyrosine. K117 is modified (N6-acetyllysine). Phosphoserine is present on residues S186 and S232.

The protein belongs to the 14-3-3 family. Homodimer. Interacts with SAMSN1 and PRKCE. Interacts with AKAP13. Interacts with SSH1 and TORC2/CRTC2. Interacts with ABL1; the interaction results in cytoplasmic location of ABL1 and inhibition of cABL-mediated apoptosis. Interacts with ROR2 (dimer); the interaction results in phosphorylation of YWHAB on tyrosine residues. Interacts with GAB2. Interacts with YAP1 (phosphorylated form). Interacts with the phosphorylated (by AKT1) form of SRPK2. Interacts with PKA-phosphorylated AANAT. Interacts with MYO1C. Interacts with SIRT2. Interacts with the 'Thr-369' phosphorylated form of DAPK2. Interacts with PI4KB, TBC1D22A and TBC1D22B. Interacts with the 'Ser-1134' and 'Ser-1161' phosphorylated form of SOS1. Interacts (via phosphorylated form) with YWHAB; this interaction occurs in a protein kinase AKT1-dependent manner. Interacts with SLITRK1. Interacts with SYNPO2 (phosphorylated form); YWHAB competes with ACTN2 for interaction with SYNPO2. Interacts with RIPOR2 (via phosphorylated form); this interaction occurs in a chemokine-dependent manner and does not compete for binding of RIPOR2 with RHOA nor blocks inhibition of RIPOR2-mediated RHOA activity. Interacts with MARK2 and MARK3. Interacts with TESK1; the interaction is dependent on the phosphorylation of TESK1 'Ser-439' and inhibits TESK1 kinase activity. Interacts with MEFV. Interacts with HDAC4. Interacts with ADAM22 (via C-terminus). The alpha, brain-specific form differs from the beta form in being phosphorylated. Phosphorylated on Ser-60 by protein kinase C delta type catalytic subunit in a sphingosine-dependent fashion.

It is found in the cytoplasm. Its subcellular location is the melanosome. Its function is as follows. Adapter protein implicated in the regulation of a large spectrum of both general and specialized signaling pathways. Binds to a large number of partners, usually by recognition of a phosphoserine or phosphothreonine motif. Binding generally results in the modulation of the activity of the binding partner. Negative regulator of osteogenesis. Blocks the nuclear translocation of the phosphorylated form (by AKT1) of SRPK2 and antagonizes its stimulatory effect on cyclin D1 expression resulting in blockage of neuronal apoptosis elicited by SRPK2. Negative regulator of signaling cascades that mediate activation of MAP kinases via AKAP13. The chain is 14-3-3 protein beta/alpha (YWHAB) from Bos taurus (Bovine).